We begin with the raw amino-acid sequence, 134 residues long: MDDEYLALLDRAYKLVSPKAQRRAEIPKIEVVNMPRKTIIQNFGAIAKRLNRDVYLMAKFFQKELAVPGTVEGDVFTLHGEKSPKVVEAVYERFIKYYVVCPVCNSIDTELRREGRIFVLHCLACGASTPVRPL.

The protein belongs to the eIF-2-beta/eIF-5 family. In terms of assembly, heterotrimer composed of an alpha, a beta and a gamma chain.

EIF-2 functions in the early steps of protein synthesis by forming a ternary complex with GTP and initiator tRNA. The chain is Translation initiation factor 2 subunit beta from Pyrobaculum calidifontis (strain DSM 21063 / JCM 11548 / VA1).